We begin with the raw amino-acid sequence, 401 residues long: Imidazolonepropionase (401 aa).

2 residues coordinate Fe(3+): histidine 66 and histidine 68. The Zn(2+) site is built by histidine 66 and histidine 68. The 4-imidazolone-5-propanoate site is built by arginine 75, tyrosine 138, and histidine 171. N-formimidoyl-L-glutamate is bound at residue tyrosine 138. Histidine 236 is a Fe(3+) binding site. Residue histidine 236 coordinates Zn(2+). 4-imidazolone-5-propanoate is bound at residue glutamine 239. Residue aspartate 311 participates in Fe(3+) binding. Zn(2+) is bound at residue aspartate 311. The N-formimidoyl-L-glutamate site is built by asparagine 313 and glycine 315. Residue threonine 316 participates in 4-imidazolone-5-propanoate binding.

It belongs to the metallo-dependent hydrolases superfamily. HutI family. The cofactor is Zn(2+). Fe(3+) is required as a cofactor.

It is found in the cytoplasm. The catalysed reaction is 4-imidazolone-5-propanoate + H2O = N-formimidoyl-L-glutamate. It participates in amino-acid degradation; L-histidine degradation into L-glutamate; N-formimidoyl-L-glutamate from L-histidine: step 3/3. In terms of biological role, catalyzes the hydrolytic cleavage of the carbon-nitrogen bond in imidazolone-5-propanoate to yield N-formimidoyl-L-glutamate. It is the third step in the universal histidine degradation pathway. This chain is Imidazolonepropionase, found in Pseudomonas fluorescens (strain Pf0-1).